We begin with the raw amino-acid sequence, 290 residues long: MNFQDVILKLQDFWSDYGCCIVQPLDIEVGAGTFNPSTFFRVIGPEPWNTAYVEPSRRPTDGRYGENPNRLQHYFQFQVILKPSPDDVQDLYLKSLEVIGIDAKEHDIRFVEDDWESPTLGAWGLGWEVWLNGMEVTQFTYFQQVGGIDLKPVSVELTYGLERLCMYLQGVESVYDLKWNDKVTYGQIFYQNEVEQSKYNFELSDASMLLDLFDKYEAESKKLCEEGLPRPAYEYCLKCSHTFNMLDARGAISITERATYIGRVRNLASAAAKLYAEERENLNYPMLDND.

It belongs to the class-II aminoacyl-tRNA synthetase family. In terms of assembly, tetramer of two alpha and two beta subunits.

The protein resides in the cytoplasm. It catalyses the reaction tRNA(Gly) + glycine + ATP = glycyl-tRNA(Gly) + AMP + diphosphate. In Maridesulfovibrio salexigens (strain ATCC 14822 / DSM 2638 / NCIMB 8403 / VKM B-1763) (Desulfovibrio salexigens), this protein is Glycine--tRNA ligase alpha subunit.